We begin with the raw amino-acid sequence, 687 residues long: FAD-dependent oxidoreductase domain-containing protein 2 (687 aa).

The signal sequence occupies residues 1-22 (MSVIQLVFRLLCVLDLLLAVSA). Asn29 and Asn305 each carry an N-linked (GlcNAc...) asparagine glycan.

The protein belongs to the FOXRED2 family. FAD serves as cofactor. Post-translationally, N-glycosylated.

The protein resides in the endoplasmic reticulum lumen. Functionally, probable flavoprotein which may function in endoplasmic reticulum associated degradation (ERAD). May bind non-native proteins in the endoplasmic reticulum and target them to the ubiquitination machinery for subsequent degradation. This is FAD-dependent oxidoreductase domain-containing protein 2 (foxred2) from Danio rerio (Zebrafish).